The sequence spans 285 residues: Putative sugar uptake protein lp_2503 (285 aa).

Helical transmembrane passes span 2-21 (GILIALIPAIAWGSIGLISG), 31-48 (TLGMTMGALVFGLALWAV), 55-72 (SKIWLIGIVSGLFWSIGQ), 112-134 (GNMYWIGSASVIVLIAGAVLTSL), 147-169 (NWGVGIRALILSTIGYAGYTIVV), 179-196 (VVMPQAVGMLLGALIWSF), 209-228 (NIVTGLVWGIGNLFMFMAMA), 233-255 (AVAYSLSQMGIVISTFGSIYLLG), and 264-283 (VYVVIGSILVIVGGVALSLM).

It belongs to the GRP transporter (TC 2.A.7.5) family.

The protein localises to the cell membrane. The sequence is that of Putative sugar uptake protein lp_2503 from Lactiplantibacillus plantarum (strain ATCC BAA-793 / NCIMB 8826 / WCFS1) (Lactobacillus plantarum).